A 217-amino-acid polypeptide reads, in one-letter code: 3-dehydroquinate dehydratase (217 aa).

3-dehydroquinate-binding positions include 26 to 28 (EFR) and arginine 59. The Proton donor/acceptor role is filled by histidine 114. Lysine 140 functions as the Schiff-base intermediate with substrate in the catalytic mechanism. Arginine 178 and glutamine 201 together coordinate 3-dehydroquinate.

The protein belongs to the type-I 3-dehydroquinase family. Homodimer.

It catalyses the reaction 3-dehydroquinate = 3-dehydroshikimate + H2O. It participates in metabolic intermediate biosynthesis; chorismate biosynthesis; chorismate from D-erythrose 4-phosphate and phosphoenolpyruvate: step 3/7. Involved in the third step of the chorismate pathway, which leads to the biosynthesis of aromatic amino acids. Catalyzes the cis-dehydration of 3-dehydroquinate (DHQ) and introduces the first double bond of the aromatic ring to yield 3-dehydroshikimate. In Hydrogenobaculum sp. (strain Y04AAS1), this protein is 3-dehydroquinate dehydratase.